The primary structure comprises 88 residues: MKKILIGGIRLYQKYISRFTPATCRFYPTCSAYGIEAIQTHGALKGSYLAIRRISKCHPFHKGGLDFVPPKKDKNADSEHSCKVHHHH.

The interval 68–88 (VPPKKDKNADSEHSCKVHHHH) is disordered. The segment covering 69–82 (PPKKDKNADSEHSC) has biased composition (basic and acidic residues).

This sequence belongs to the UPF0161 family.

The protein localises to the cell membrane. In terms of biological role, could be involved in insertion of integral membrane proteins into the membrane. This Listeria monocytogenes serovar 1/2a (strain ATCC BAA-679 / EGD-e) protein is Putative membrane protein insertion efficiency factor.